The following is a 323-amino-acid chain: 4-hydroxythreonine-4-phosphate dehydrogenase (323 aa).

T133 contributes to the substrate binding site. A divalent metal cation contacts are provided by H161, H206, and H261. Substrate-binding residues include K269, N278, and R287.

The protein belongs to the PdxA family. Homodimer. Requires Zn(2+) as cofactor. It depends on Mg(2+) as a cofactor. Co(2+) is required as a cofactor.

The protein localises to the cytoplasm. It catalyses the reaction 4-(phosphooxy)-L-threonine + NAD(+) = 3-amino-2-oxopropyl phosphate + CO2 + NADH. The protein operates within cofactor biosynthesis; pyridoxine 5'-phosphate biosynthesis; pyridoxine 5'-phosphate from D-erythrose 4-phosphate: step 4/5. Functionally, catalyzes the NAD(P)-dependent oxidation of 4-(phosphooxy)-L-threonine (HTP) into 2-amino-3-oxo-4-(phosphooxy)butyric acid which spontaneously decarboxylates to form 3-amino-2-oxopropyl phosphate (AHAP). This chain is 4-hydroxythreonine-4-phosphate dehydrogenase, found in Xanthomonas axonopodis pv. citri (strain 306).